The primary structure comprises 186 residues: Ribosome-recycling factor (186 aa).

Belongs to the RRF family.

It localises to the cytoplasm. Responsible for the release of ribosomes from messenger RNA at the termination of protein biosynthesis. May increase the efficiency of translation by recycling ribosomes from one round of translation to another. This is Ribosome-recycling factor from Polaromonas naphthalenivorans (strain CJ2).